Consider the following 376-residue polypeptide: Putative type I restriction enzyme MpnIIP endonuclease subunit N-terminal part (376 aa).

Its function is as follows. The N-terminal section of a putative type I restriction enzyme that if reconstituted might recognize 5'-GAN(7)TAY-3' and cleave a random distance away. Subunit R is required for both nuclease and ATPase activities, but not for modification. The chain is Putative type I restriction enzyme MpnIIP endonuclease subunit N-terminal part from Mycoplasma pneumoniae (strain ATCC 29342 / M129 / Subtype 1) (Mycoplasmoides pneumoniae).